A 366-amino-acid chain; its full sequence is Chorismate synthase (366 aa).

2 residues coordinate NADP(+): Arg48 and Arg54. FMN contacts are provided by residues Arg125–Ser127, Asn238–Ala239, Gly278, Lys293–Ser297, and Arg319.

The protein belongs to the chorismate synthase family. Homotetramer. FMNH2 serves as cofactor.

The catalysed reaction is 5-O-(1-carboxyvinyl)-3-phosphoshikimate = chorismate + phosphate. It participates in metabolic intermediate biosynthesis; chorismate biosynthesis; chorismate from D-erythrose 4-phosphate and phosphoenolpyruvate: step 7/7. Functionally, catalyzes the anti-1,4-elimination of the C-3 phosphate and the C-6 proR hydrogen from 5-enolpyruvylshikimate-3-phosphate (EPSP) to yield chorismate, which is the branch point compound that serves as the starting substrate for the three terminal pathways of aromatic amino acid biosynthesis. This reaction introduces a second double bond into the aromatic ring system. This is Chorismate synthase from Neisseria meningitidis serogroup A / serotype 4A (strain DSM 15465 / Z2491).